The chain runs to 88 residues: Putative membrane protein insertion efficiency factor (88 aa).

The interval valine 68 to leucine 88 is disordered. Over residues threonine 75–leucine 88 the composition is skewed to basic and acidic residues.

The protein belongs to the UPF0161 family.

It localises to the cell inner membrane. Functionally, could be involved in insertion of integral membrane proteins into the membrane. The chain is Putative membrane protein insertion efficiency factor from Burkholderia orbicola (strain MC0-3).